Here is a 395-residue protein sequence, read N- to C-terminus: Phosphoglycerate kinase (395 aa).

Residues 20-22 (DFN), arginine 36, 59-62 (HLGR), arginine 120, and arginine 157 contribute to the substrate site. ATP is bound by residues lysine 208, glycine 296, glutamate 327, and 353–356 (GGDT).

Belongs to the phosphoglycerate kinase family. In terms of assembly, monomer.

The protein resides in the cytoplasm. The enzyme catalyses (2R)-3-phosphoglycerate + ATP = (2R)-3-phospho-glyceroyl phosphate + ADP. The protein operates within carbohydrate degradation; glycolysis; pyruvate from D-glyceraldehyde 3-phosphate: step 2/5. The polypeptide is Phosphoglycerate kinase (Tropheryma whipplei (strain Twist) (Whipple's bacillus)).